We begin with the raw amino-acid sequence, 257 residues long: Glucose-1-phosphate cytidylyltransferase (257 aa).

Substrate is bound by residues 6–10 (LAGGL), 11–13 (GTR), lysine 23, serine 104, arginine 109, and glycine 128. The Mg(2+) site is built by aspartate 129 and aspartate 234.

This sequence belongs to the glucose-1-phosphate cytidylyltransferase family. Homohexamer. It depends on Mg(2+) as a cofactor.

It carries out the reaction alpha-D-glucose 1-phosphate + CTP + H(+) = CDP-D-glucose + diphosphate. The protein operates within nucleotide-sugar biosynthesis; CDP-3,6-dideoxy-D-mannose biosynthesis; CDP-3,6-dideoxy-D-mannose from CTP and alpha-D-glucose 1-phosphate: step 1/5. Its pathway is bacterial outer membrane biogenesis; LPS O-antigen biosynthesis. Functionally, involved in the biosynthesis of the tyvelose, a 3,6-dideoxyhexose found in the O-antigen of the surface lipopolysaccharides. It catalyzes the transfer of a CMP moiety from CTP to glucose 1-phosphate. In Salmonella typhimurium (strain LT2 / SGSC1412 / ATCC 700720), this protein is Glucose-1-phosphate cytidylyltransferase (rfbF).